Reading from the N-terminus, the 377-residue chain is 1-deoxy-D-xylulose 5-phosphate reductoisomerase (377 aa).

Residues Thr-20, Gly-21, Ile-23, Asn-46, and Asn-115 each contribute to the NADPH site. Lys-116 provides a ligand contact to 1-deoxy-D-xylulose 5-phosphate. Glu-117 contacts NADPH. Asp-141 is a Mn(2+) binding site. Ser-142, Glu-143, Ser-166, and His-189 together coordinate 1-deoxy-D-xylulose 5-phosphate. Glu-143 is a Mn(2+) binding site. Gly-195 is an NADPH binding site. 4 residues coordinate 1-deoxy-D-xylulose 5-phosphate: Ser-202, Asn-207, Lys-208, and Glu-211. Glu-211 provides a ligand contact to Mn(2+).

Belongs to the DXR family. Mg(2+) is required as a cofactor. The cofactor is Mn(2+).

It catalyses the reaction 2-C-methyl-D-erythritol 4-phosphate + NADP(+) = 1-deoxy-D-xylulose 5-phosphate + NADPH + H(+). Its pathway is isoprenoid biosynthesis; isopentenyl diphosphate biosynthesis via DXP pathway; isopentenyl diphosphate from 1-deoxy-D-xylulose 5-phosphate: step 1/6. Its function is as follows. Catalyzes the NADPH-dependent rearrangement and reduction of 1-deoxy-D-xylulose-5-phosphate (DXP) to 2-C-methyl-D-erythritol 4-phosphate (MEP). The sequence is that of 1-deoxy-D-xylulose 5-phosphate reductoisomerase from Malacoplasma penetrans (strain HF-2) (Mycoplasma penetrans).